The sequence spans 152 residues: Protein NrdI (152 aa).

Belongs to the NrdI family.

In terms of biological role, probably involved in ribonucleotide reductase function. In Mycolicibacterium vanbaalenii (strain DSM 7251 / JCM 13017 / BCRC 16820 / KCTC 9966 / NRRL B-24157 / PYR-1) (Mycobacterium vanbaalenii), this protein is Protein NrdI.